We begin with the raw amino-acid sequence, 418 residues long: Staphyloferrin B transporter (418 aa).

The next 10 membrane-spanning stretches (helical) occupy residues 19 to 39 (FIAIAGLTVLVPLLPIYMASL), 49 to 69 (LWSGIAIAAPAVTTMIASPIW), 88 to 108 (GLAVCLFLMALCTTPLQFVLV), 163 to 183 (ILGFSALLMSIAVITFIVCIF), 222 to 242 (FIIVGVLANFAMYGMLTALSP), 257 to 277 (VIGFLQSAFWTASILSAPLWG), 287 to 307 (SVYIFATIACGCSAILQGLAT), 317 to 337 (ILQGLTYSALIQSVMFVVVNA), 353 to 373 (MLVVGQIIGSLSGAAITSYTT), and 377 to 397 (TFIVMGVVFAVSSLFLICSTI).

This sequence belongs to the major facilitator superfamily.

Its subcellular location is the cell membrane. Its function is as follows. Involved in staphyloferrin B secretion. This is Staphyloferrin B transporter from Staphylococcus aureus (strain NCTC 8325 / PS 47).